An 863-amino-acid polypeptide reads, in one-letter code: MKLGWLEAAALTAASVASAQVKQDDLPVSPPYYPSPWSNGEGEWAEAYNRAVQIVSQMTLDEKVNLTTGTGMSEKCVGQTGSVPRLGINSICLQDGPLGIRFTDYNSAFPAGVNVAATWDRQLAYIRGHAMGQEFSDKGIDVQLGPAAGPLGRFPDGGRNWEGFSPDPVLSGVLFAETIKGIQDAGVIATAKHYLLNEQEHFRQVPEANGYGYNITETLSENVDDKTLHELYLWPFADAVRAGVGAIMCSYQHLNNTQACQNSHLLNKLLKAELGFQGFVMSDWSATHSGVGSALAGMDMTMPGDIAFNDGLSYYGPNLTISVLNGTVPQWRVDDMAVRVMAAFYKVGRDRLATPPNFSSWTRAEKGYEHASIDGGAYGTVNEFVDVQQDHASLIRRVGADSIVLLKNEGSLPLTGKERNVAILGEDAGSNPYGANGCDDRGCAQGTLAMGWGSGTANFPYLVTPEQAIQQEVLKGRGNVFAVTDNWALDKVNKTASESTVSLVFVNAGAGEGFISVDGNEGDRKNLTLWKNGENLIKAAASNCNNTIVVIHSVGAVLVDQFYEHPNVTAILWAGLPGQESGNSLVDVLYGRVNPNGKSPFTWGKTREAYGAPLLTEANNGNGAPQTDHTEGVFIDYRHFDRTNQTPIYEFGHGLSYTTFKYSNLTVQKLNAPAYSPASGQTKAAPTFGTIGEAEDYVFPDSITRVREFIYPWINSTDLKESSGDPNYGWDDEDYIPEGAKDGSPQDVLPSGGGAGGNPRLYDDLFRITAIIKNTGPVAGTEVPQLYVSLGGPNEPKVVLRGFDKLVIQPGEERVFTTTLTRRDLSNWDMEKDDWVITSYPKKVFVGSSSRKLPLRASLPAVQ.

Positions 1–19 (MKLGWLEAAALTAASVASA) are cleaved as a signal peptide. 3 N-linked (GlcNAc...) asparagine glycosylation sites follow: Asn65, Asn214, and Asn255. Residue Asp283 is part of the active site. Residues Asn318, Asn325, Asn357, Asn493, Asn526, Asn545, Asn567, Asn664, and Asn715 are each glycosylated (N-linked (GlcNAc...) asparagine). The disordered stretch occupies residues 720–754 (KESSGDPNYGWDDEDYIPEGAKDGSPQDVLPSGGG).

Belongs to the glycosyl hydrolase 3 family.

The protein resides in the secreted. The catalysed reaction is Hydrolysis of terminal, non-reducing beta-D-glucosyl residues with release of beta-D-glucose.. Its pathway is glycan metabolism; cellulose degradation. In terms of biological role, beta-glucosidases are one of a number of cellulolytic enzymes involved in the degradation of cellulosic biomass. Catalyzes the last step releasing glucose from the inhibitory cellobiose. The sequence is that of Probable beta-glucosidase A (bglA) from Emericella nidulans (strain FGSC A4 / ATCC 38163 / CBS 112.46 / NRRL 194 / M139) (Aspergillus nidulans).